We begin with the raw amino-acid sequence, 201 residues long: Holliday junction branch migration complex subunit RuvA (201 aa).

The tract at residues 1–64 (MYEYIRGQFQ…EDFIGLYGFT (64 aa)) is domain I. The tract at residues 65-143 (TREELEMFKL…PDELTSEEGE (79 aa)) is domain II. Residues 144–152 (LIEGINDNS) are flexible linker. A domain III region spans residues 153–201 (DYSFNINETLSALMALGYTEKEAQKALEKVDKTLSIENMIKESLKLLMR).

This sequence belongs to the RuvA family. In terms of assembly, homotetramer. Forms an RuvA(8)-RuvB(12)-Holliday junction (HJ) complex. HJ DNA is sandwiched between 2 RuvA tetramers; dsDNA enters through RuvA and exits via RuvB. An RuvB hexamer assembles on each DNA strand where it exits the tetramer. Each RuvB hexamer is contacted by two RuvA subunits (via domain III) on 2 adjacent RuvB subunits; this complex drives branch migration. In the full resolvosome a probable DNA-RuvA(4)-RuvB(12)-RuvC(2) complex forms which resolves the HJ.

It localises to the cytoplasm. Its function is as follows. The RuvA-RuvB-RuvC complex processes Holliday junction (HJ) DNA during genetic recombination and DNA repair, while the RuvA-RuvB complex plays an important role in the rescue of blocked DNA replication forks via replication fork reversal (RFR). RuvA specifically binds to HJ cruciform DNA, conferring on it an open structure. The RuvB hexamer acts as an ATP-dependent pump, pulling dsDNA into and through the RuvAB complex. HJ branch migration allows RuvC to scan DNA until it finds its consensus sequence, where it cleaves and resolves the cruciform DNA. The polypeptide is Holliday junction branch migration complex subunit RuvA (Clostridium perfringens (strain ATCC 13124 / DSM 756 / JCM 1290 / NCIMB 6125 / NCTC 8237 / Type A)).